The sequence spans 908 residues: Protein translocase subunit SecA (908 aa).

ATP is bound by residues Q87, G105–T109, and D512. A disordered region spans residues A860–S908. 4 residues coordinate Zn(2+): C892, C894, C903, and H904. Residues R898–S908 show a composition bias toward basic residues.

This sequence belongs to the SecA family. Monomer and homodimer. Part of the essential Sec protein translocation apparatus which comprises SecA, SecYEG and auxiliary proteins SecDF-YajC and YidC. The cofactor is Zn(2+).

The protein resides in the cell inner membrane. It localises to the cytoplasm. The enzyme catalyses ATP + H2O + cellular proteinSide 1 = ADP + phosphate + cellular proteinSide 2.. Functionally, part of the Sec protein translocase complex. Interacts with the SecYEG preprotein conducting channel. Has a central role in coupling the hydrolysis of ATP to the transfer of proteins into and across the cell membrane, serving both as a receptor for the preprotein-SecB complex and as an ATP-driven molecular motor driving the stepwise translocation of polypeptide chains across the membrane. The protein is Protein translocase subunit SecA of Shewanella baltica (strain OS155 / ATCC BAA-1091).